The primary structure comprises 268 residues: 4-diphosphocytidyl-2-C-methyl-D-erythritol kinase (268 aa).

K9 is an active-site residue. Residue 88–98 (PPGAGLGGGSS) participates in ATP binding. Residue D130 is part of the active site.

Belongs to the GHMP kinase family. IspE subfamily.

The enzyme catalyses 4-CDP-2-C-methyl-D-erythritol + ATP = 4-CDP-2-C-methyl-D-erythritol 2-phosphate + ADP + H(+). Its pathway is isoprenoid biosynthesis; isopentenyl diphosphate biosynthesis via DXP pathway; isopentenyl diphosphate from 1-deoxy-D-xylulose 5-phosphate: step 3/6. In terms of biological role, catalyzes the phosphorylation of the position 2 hydroxy group of 4-diphosphocytidyl-2C-methyl-D-erythritol. This Aquifex aeolicus (strain VF5) protein is 4-diphosphocytidyl-2-C-methyl-D-erythritol kinase.